The primary structure comprises 468 residues: Na(+)/H(+) antiporter NhaA 2 (468 aa).

11 consecutive transmembrane segments (helical) span residues 31 to 51 (FLHV…VALA), 82 to 102 (LHFW…GLEI), 118 to 138 (VLPV…YLAL), 147 to 167 (GWGV…ALLG), 176 to 196 (VLLL…IAVF), 199 to 219 (SSIS…VLAL), 226 to 246 (SPVV…SAGV), 321 to 341 (PWVA…VSLG), 353 to 373 (LLLG…MVAC), 393 to 413 (VLVV…VAGL), and 422 to 442 (GVAK…AMAV).

This sequence belongs to the NhaA Na(+)/H(+) (TC 2.A.33) antiporter family.

Its subcellular location is the cell inner membrane. It catalyses the reaction Na(+)(in) + 2 H(+)(out) = Na(+)(out) + 2 H(+)(in). Functionally, na(+)/H(+) antiporter that extrudes sodium in exchange for external protons. This Sorangium cellulosum (strain So ce56) (Polyangium cellulosum (strain So ce56)) protein is Na(+)/H(+) antiporter NhaA 2.